We begin with the raw amino-acid sequence, 74 residues long: Exodeoxyribonuclease 7 small subunit (74 aa).

It belongs to the XseB family. In terms of assembly, heterooligomer composed of large and small subunits.

The protein resides in the cytoplasm. The enzyme catalyses Exonucleolytic cleavage in either 5'- to 3'- or 3'- to 5'-direction to yield nucleoside 5'-phosphates.. Its function is as follows. Bidirectionally degrades single-stranded DNA into large acid-insoluble oligonucleotides, which are then degraded further into small acid-soluble oligonucleotides. The protein is Exodeoxyribonuclease 7 small subunit of Bdellovibrio bacteriovorus (strain ATCC 15356 / DSM 50701 / NCIMB 9529 / HD100).